A 192-amino-acid polypeptide reads, in one-letter code: Erythropoietin (192 aa).

A signal peptide spans 1–26; that stretch reads MGVPERPTLLLLLSLLLIPLGLPVLC. The cysteines at positions 33 and 187 are disulfide-linked. N-linked (GlcNAc...) asparagine glycans are attached at residues Asn50, Asn64, and Asn109.

Belongs to the EPO/TPO family. In terms of tissue distribution, produced by kidney or liver of adult mammals and by liver of fetal or neonatal mammals.

It localises to the secreted. Hormone involved in the regulation of erythrocyte proliferation and differentiation and the maintenance of a physiological level of circulating erythrocyte mass. Binds to EPOR leading to EPOR dimerization and JAK2 activation thereby activating specific downstream effectors, including STAT1 and STAT3. This chain is Erythropoietin (Epo), found in Mus musculus (Mouse).